A 477-amino-acid chain; its full sequence is 3-isopropylmalate dehydratase large subunit (477 aa).

[4Fe-4S] cluster contacts are provided by C351, C411, and C414.

Belongs to the aconitase/IPM isomerase family. LeuC type 1 subfamily. Heterodimer of LeuC and LeuD. [4Fe-4S] cluster serves as cofactor.

It carries out the reaction (2R,3S)-3-isopropylmalate = (2S)-2-isopropylmalate. Its pathway is amino-acid biosynthesis; L-leucine biosynthesis; L-leucine from 3-methyl-2-oxobutanoate: step 2/4. Catalyzes the isomerization between 2-isopropylmalate and 3-isopropylmalate, via the formation of 2-isopropylmaleate. The protein is 3-isopropylmalate dehydratase large subunit of Kineococcus radiotolerans (strain ATCC BAA-149 / DSM 14245 / SRS30216).